The chain runs to 757 residues: MLGMCRGRRKFVAASLALIFIPALTWLYLSSANITVKPLPLSPLDPQSSAVVGAAAEHQSLELRLRDVEEHNNALRREISRTPRVPTHSSHPSSSRHGNQLHTHSTEEGTGDSEAKKGAAAGNSSDCVPQPVVKKCETIHIAIVCAGYNASRDVVTLVKSVLFHRRNPLHFHIITDSIARKILADLFHTWMVPAVHVNFYDADELKSEVSWIPNKHYSGIHGLMKLVLTKTLPSDLEKVIVLDTDITFATDIAELWVVFHKFKGQQVLGLVENQSDWYLGNLWKNHRPWPALGRGFNTGVILLLLDRLRKLKWEQMWRLTAERELMSMLSTSLADQDIFNAVIKQNPFLVHQLPCYWNVQLSDHTRSEKCYKDVSDLKVIHWNSPKKLRVKNKHVEFFRNLYLTFLEYDGNLLRRELFGCPSETDHNSENLQKTLSELDEDDPCYEFRRERFTVHRTHVYFLHYEYEPTVDNTDVTLVAQLSMDRLQMLEAICKHWEGPISLALYLSDAEAQQFLRYAQGSEVLMSRSNVGYHIVYKEGQFYPVNLLRNVAMGQVNTPYMFLSDIDFLPMYGLYEYLRKSVVQLDMGNTKKALVVPAFETLRYRLSFPKSKAELLSQLDMGTLFTFRYHVWTKGHAPTDFAKWRTATTPYRVQWEADFEPYVMVRRESPEYDRRFVGFGWNKVAHIMELDAQEYEFVVLPNAYMIHMPHAPSFDITKFRSNKQYRACLKTLKEEFQQNMSRRYGFAALKYMTVDNNS.

Topologically, residues 1–10 (MLGMCRGRRK) are cytoplasmic. The chain crosses the membrane as a helical; Signal-anchor for type II membrane protein span at residues 11–31 (FVAASLALIFIPALTWLYLSS). At 32 to 757 (ANITVKPLPL…LKYMTVDNNS (726 aa)) the chain is on the lumenal side. A coiled-coil region spans residues 50–82 (AVVGAAAEHQSLELRLRDVEEHNNALRREISRT). Positions 76–127 (RREISRTPRVPTHSSHPSSSRHGNQLHTHSTEEGTGDSEAKKGAAAGNSSDC) are disordered. A compositionally biased stretch (low complexity) spans 82–97 (TPRVPTHSSHPSSSRH). Residues Asn123 and Asn149 are each glycosylated (N-linked (GlcNAc...) asparagine). The tract at residues 139-414 (IHIAIVCAGY…FLEYDGNLLR (276 aa)) is xylosyltransferase activity. Mn(2+) is bound by residues Asp243 and Asp245. Asn273 carries an N-linked (GlcNAc...) asparagine glycan. The glucuronyltransferase activity stretch occupies residues 415–757 (RELFGCPSET…LKYMTVDNNS (343 aa)). Mn(2+)-binding residues include Asp564 and Asp566. Residue Asn738 is glycosylated (N-linked (GlcNAc...) asparagine).

In the C-terminal section; belongs to the glycosyltransferase 49 family. The protein in the N-terminal section; belongs to the glycosyltransferase 8 family. It depends on Mn(2+) as a cofactor.

The protein resides in the golgi apparatus membrane. It carries out the reaction 3-O-[beta-D-GlcA-(1-&gt;3)-beta-D-Xyl-(1-&gt;4)-Rib-ol-P-Rib-ol-P-3-beta-D-GalNAc-(1-&gt;3)-beta-D-GlcNAc-(1-&gt;4)-(O-6-P-alpha-D-Man)]-Thr-[protein] + UDP-alpha-D-xylose = 3-O-[alpha-D-Xyl-(1-&gt;3)-beta-D-GlcA-(1-&gt;4)-beta-D-Xyl-(1-&gt;4)-Rib-ol-P-Rib-ol-P-3-beta-D-GalNAc-(1-&gt;3)-beta-D-GlcNAc-(1-&gt;4)-(O-6-P-alpha-D-Man)]-Thr-[protein] + UDP + H(+). The enzyme catalyses 3-O-{(1-&gt;[3)-alpha-D-Xyl-(1-&gt;3)-beta-D-GlcA-(1-&gt;](n)-4)-beta-D-Xyl-(1-&gt;4)-Rib-ol-P-Rib-ol-P-3-beta-D-GalNAc-(1-&gt;3)-beta-D-GlcNAc-(1-&gt;4)-O-6-P-alpha-D-Man}-L-Thr-[protein] + UDP-alpha-D-glucuronate = 3-O-{beta-D-GlcA-(1-&gt;[3)-alpha-D-Xyl-(1-&gt;3)-beta-D-GlcA-(1-&gt;](n)-4)-beta-D-Xyl-(1-&gt;4)-Rib-ol-P-Rib-ol-P-3-beta-D-GalNAc-(1-&gt;3)-beta-D-GlcNAc-(1-&gt;4)-O-6-P-alpha-D-Man}-L-Thr-[protein] + UDP + H(+). The catalysed reaction is 3-O-{beta-D-GlcA-(1-&gt;[3)-alpha-D-Xyl-(1-&gt;3)-beta-D-GlcA-(1-&gt;](n)-4)-beta-D-Xyl-(1-&gt;4)-Rib-ol-P-Rib-ol-P-3-beta-D-GalNAc-(1-&gt;3)-beta-D-GlcNAc-(1-&gt;4)-O-6-P-alpha-D-Man}-L-Thr-[protein] + UDP-alpha-D-xylose = 3-O-{(1-&gt;[3)-alpha-D-Xyl-(1-&gt;3)-beta-D-GlcA-(1-&gt;](n+1)-4)-beta-D-Xyl-(1-&gt;4)-Rib-ol-P-Rib-ol-P-3-beta-D-GalNAc-(1-&gt;3)-beta-D-GlcNAc-(1-&gt;4)-O-6-P-alpha-D-Man}-L-Thr-[protein] + UDP + H(+). Its pathway is protein modification; protein glycosylation. Its function is as follows. Bifunctional glycosyltransferase with both alpha-1,3-xylosyltransferase and beta-1,3-glucuronyltransferase activities involved in the maturation of alpha-dystroglycan (DAG1) by glycosylation leading to DAG1 binding to laminin G-like domain-containing extracellular proteins with high affinity. Elongates the glucuronyl-beta-1,4-xylose-beta disaccharide primer structure initiated by B4GAT1 by adding repeating units [-3-Xylose-alpha-1,3-GlcA-beta-1-] to produce a heteropolysaccharide. Requires the phosphorylation of core M3 (O-mannosyl trisaccharide) by POMK to elongate the glucuronyl-beta-1,4-xylose-beta disaccharide primer. Plays a key role in skeletal muscle function and regeneration. The chain is Xylosyl- and glucuronyltransferase LARGE1 from Danio rerio (Zebrafish).